Reading from the N-terminus, the 145-residue chain is Protein H2A.5 (145 aa).

The tract at residues 118-145 (SPAAAEKEAKSQKAAAKSPKKKTAATKE) is disordered. The SPKK motif motif lies at 135-138 (SPKK). Residues 135–145 (SPKKKTAATKE) are compositionally biased toward basic residues.

This sequence belongs to the histone H2A family. The nucleosome is a histone octamer containing two molecules each of H2A, H2B, H3 and H4 assembled in one H3-H4 heterotetramer and two H2A-H2B heterodimers. The octamer wraps approximately 147 bp of DNA. In terms of tissue distribution, abundant in meristematic tissues.

It localises to the nucleus. The protein resides in the chromosome. Its function is as follows. Core component of nucleosome. Nucleosomes wrap and compact DNA into chromatin, limiting DNA accessibility to the cellular machineries which require DNA as a template. Histones thereby play a central role in transcription regulation, DNA repair, DNA replication and chromosomal stability. DNA accessibility is regulated via a complex set of post-translational modifications of histones, also called histone code, and nucleosome remodeling. The polypeptide is Protein H2A.5 (H2A-2) (Triticum aestivum (Wheat)).